We begin with the raw amino-acid sequence, 824 residues long: MNRRGGQTAFAAIARNERAIAAFIPYSSHLTDTTLITHGADLVRTWRVQGIAFESAEPELVSQRHEQLNGLWRAISCEQVALWIHCIRRKTQAGLDARYENPFCRALDASYNARLNARQAMTNEFYLTLVYRPGHAALGKRAHHGQAEVRRQLLAHVRRMDEIGSLIETTLRSHGEDHEQAITVLGCETDSAGRRYSRTLTLLEFLLTGHWQPVRVPAGPLDAYLGSSRILAGAEMMELRSPTCRRYAQFIDFKEYGTHTEPGMLNALLYEDYEYVITHSFSAVGKRQALAYLQRQRAQLANVQDAAYSQIDDLAHAEDALVNGDFVIGEYHFSMMILGADPRQLRRDVSSAMTRIQERGFLATPVTLALDAAFYAQLPANWAYRPRKAMLTSRNFAGLCSFHNFYGGKRDGNPWGPALSLLSTPSGQPFYFNFHHSGLDEDCRGQMMLGNTRIIGQSGSGKTVLLNFLLCQLQKFRSADADGLTTIFFDKDRGAEICIRALDGQYLRIRDGEPTGFNPLQLPCTDRNVMFLDSLLAMLARAHDSPLTSAQHATLATAVRTVLRMPASLRRMSTLLQNITQATSEQRELVRRLGRWCRDDGAGGTGMLWWVFDNPNDCLDFSRPGNYGIDGTAFLDNAETRTPISMYLLHRMNEAMDGRRFVYLMDEAWKWIDDPAFAEFAGDQQLTIRKKNGLGVFSTQMPSSLLGARVAASLVQQCATEIYLPNPRADRAEYLDGFKCTETEYQLIRSMAEDSHLFLVKQGRQAVVAQLDLSGMDDELAILSGNARNLRCFEQALALTRERDPNDWIAVFHRLRREASAGLR.

ATP is bound at residue 456 to 463 (GQSGSGKT).

Belongs to the TrbE/VirB4 family.

Its subcellular location is the cell membrane. The sequence is that of Type IV secretion system protein PtlC homolog (ptlC) from Bordetella bronchiseptica (strain ATCC BAA-588 / NCTC 13252 / RB50) (Alcaligenes bronchisepticus).